The sequence spans 252 residues: Ubiquinone biosynthesis O-methyltransferase (252 aa).

Arginine 45, glycine 76, aspartate 97, and methionine 141 together coordinate S-adenosyl-L-methionine.

This sequence belongs to the methyltransferase superfamily. UbiG/COQ3 family.

The catalysed reaction is a 3-demethylubiquinol + S-adenosyl-L-methionine = a ubiquinol + S-adenosyl-L-homocysteine + H(+). It catalyses the reaction a 3-(all-trans-polyprenyl)benzene-1,2-diol + S-adenosyl-L-methionine = a 2-methoxy-6-(all-trans-polyprenyl)phenol + S-adenosyl-L-homocysteine + H(+). The protein operates within cofactor biosynthesis; ubiquinone biosynthesis. Functionally, O-methyltransferase that catalyzes the 2 O-methylation steps in the ubiquinone biosynthetic pathway. This chain is Ubiquinone biosynthesis O-methyltransferase, found in Caulobacter vibrioides (strain ATCC 19089 / CIP 103742 / CB 15) (Caulobacter crescentus).